Reading from the N-terminus, the 227-residue chain is Ribose-5-phosphate isomerase A (227 aa).

Substrate contacts are provided by residues 26–29 (TGST), 82–85 (DGAD), and 95–98 (KGGG). The Proton acceptor role is filled by Glu-104. Lys-122 contributes to the substrate binding site.

Belongs to the ribose 5-phosphate isomerase family. In terms of assembly, homodimer.

It carries out the reaction aldehydo-D-ribose 5-phosphate = D-ribulose 5-phosphate. It participates in carbohydrate degradation; pentose phosphate pathway; D-ribose 5-phosphate from D-ribulose 5-phosphate (non-oxidative stage): step 1/1. Catalyzes the reversible conversion of ribose-5-phosphate to ribulose 5-phosphate. This is Ribose-5-phosphate isomerase A from Streptococcus pyogenes serotype M1.